A 388-amino-acid chain; its full sequence is Xylose isomerase (388 aa).

Active-site residues include H54 and D57. Residues E181, E217, H220, D245, D255, D257, and D287 each coordinate Mg(2+).

This sequence belongs to the xylose isomerase family. In terms of assembly, homotetramer. Mg(2+) is required as a cofactor.

The protein localises to the cytoplasm. The catalysed reaction is alpha-D-xylose = alpha-D-xylulofuranose. Functionally, involved in D-xylose catabolism. The polypeptide is Xylose isomerase (xylA) (Streptomyces rubiginosus).